Consider the following 847-residue polypeptide: Follistatin-related protein 5 (847 aa).

Positions 1–20 are cleaved as a signal peptide; that stretch reads MFRCWSAILILGFIFLASEG. Positions 81–135 constitute a Kazal-like domain; sequence ETRHAECACMDLCKQHYKPVCGSDGEFYENHCEVHRAACLKKQKITIVHNEDCFF. 3 disulfide bridges follow: C87–C119, C93–C112, and C101–C133. 2 consecutive EF-hand domains span residues 175–210 and 211–246; these read RKKP…EELN and KDLS…QVIQ. D188, D190, N192, E199, D226, N228, D230, H232, and E237 together coordinate Ca(2+). Ig-like domains follow at residues 250–338 and 341–426; these read PEDQ…FQVN and PVIR…EDIS. Intrachain disulfides connect C270/C321 and C362/C413. N318 and N394 each carry an N-linked (GlcNAc...) asparagine glycan.

The protein localises to the secreted. This Mus musculus (Mouse) protein is Follistatin-related protein 5 (Fstl5).